A 1274-amino-acid chain; its full sequence is Myosin-binding protein C, cardiac-type (1274 aa).

Met1 carries the post-translational modification N-acetylmethionine. In terms of domain architecture, Ig-like C2-type 1 spans Pro8–Thr95. Ser47 carries the phosphoserine modification. Residues Thr95–Glu104 show a composition bias toward basic and acidic residues. Positions Thr95 to Ala153 are disordered. Thr117 carries the phosphothreonine modification. A compositionally biased stretch (polar residues) spans Leu128–Gly149. The region spanning Pro157–Thr259 is the Ig-like C2-type 2 domain. Residues Gln212, His214, Glu227, and His229 each coordinate Zn(2+). Ser279 is subject to Phosphoserine. Thr287 carries the phosphothreonine; by PKA and PKC modification. Phosphoserine is present on Ser288. Ser307 carries the post-translational modification Phosphoserine; by PKA. Phosphoserine is present on residues Ser312 and Ser427. 2 consecutive Ig-like C2-type domains span residues Lys361–Pro452 and Pro452–Glu546. Cys436 and Cys443 are oxidised to a cystine. A phosphoserine mark is found at Ser459 and Ser550. A Phosphothreonine modification is found at Thr607. The 121-residue stretch at Pro645–Thr765 folds into the Ig-like C2-type 5 domain. 2 Fibronectin type-III domains span residues Ala774–Pro870 and Glu872–Ile967. The Ig-like C2-type 6 domain maps to Pro971–Val1059. In terms of domain architecture, Fibronectin type-III 3 spans Pro1068 to Pro1163. In terms of domain architecture, Ig-like C2-type 7 spans Pro1181–Glu1269. Position 1241 is an omega-N-methylarginine (Arg1241).

It belongs to the immunoglobulin superfamily. MyBP family. Post-translationally, substrate for phosphorylation by PKA and PKC. Reversible phosphorylation appears to modulate contraction. Polyubiquitinated.

Its function is as follows. Thick filament-associated protein located in the crossbridge region of vertebrate striated muscle a bands. In vitro it binds MHC, F-actin and native thin filaments, and modifies the activity of actin-activated myosin ATPase. It may modulate muscle contraction or may play a more structural role. The polypeptide is Myosin-binding protein C, cardiac-type (Mybpc3) (Rattus norvegicus (Rat)).